Reading from the N-terminus, the 262-residue chain is 14-3-3 protein epsilon (262 aa).

Positions 236-262 (QAEEVDPNAGDGEPKEQIQDVEDQDVS) are disordered. Position 262 is a phosphoserine (Ser262).

This sequence belongs to the 14-3-3 family. As to quaternary structure, homodimer. Interacts with phosphorylated yki. Interacts with pav (when serine phosphorylated); the interaction is necessary for association of the complex pav-14-3-3epsilon complex to the microtubules, thereby inhibiting microtubule sliding.

Functionally, positively regulates Ras-mediated pathways. Acts downstream or parallel to Raf, but upstream of nuclear factors in Ras signaling. Three mutants have been isolated, that suppress the rough eye phenotype caused by mutated Ras1 (sev-Ras1 v12). Inhibits yki activity by restricting its nuclear localization. Together with pav, has a role in the inhibition of microtubule sliding during neurite outgrowth. The polypeptide is 14-3-3 protein epsilon (14-3-3epsilon) (Drosophila melanogaster (Fruit fly)).